Consider the following 194-residue polypeptide: MTSEIVLIIGAYLLGSIPTGLLLAKAVGVDIRTTGSGNIGATNVYRTLGRRVGIMTLIGDCLKGLIPVLIARHLQLPEIWVAATGLAAFLGHVYTVFLRFKGGKGVATALGVFIGISPLSVLAALAIFVFTLIKWRYVSLASITAAAAIPFLVALIEKKGLLITMSVIIAALVVFKHRENIRRLRSGTENVFKR.

The next 5 helical transmembrane spans lie at 4 to 24 (EIVL…LLLA), 78 to 98 (EIWV…TVFL), 110 to 130 (LGVF…IFVF), 137 to 157 (YVSL…ALIE), and 161 to 181 (LLIT…RENI).

Belongs to the PlsY family. Probably interacts with PlsX.

It localises to the cell inner membrane. It carries out the reaction an acyl phosphate + sn-glycerol 3-phosphate = a 1-acyl-sn-glycero-3-phosphate + phosphate. Its pathway is lipid metabolism; phospholipid metabolism. Its function is as follows. Catalyzes the transfer of an acyl group from acyl-phosphate (acyl-PO(4)) to glycerol-3-phosphate (G3P) to form lysophosphatidic acid (LPA). This enzyme utilizes acyl-phosphate as fatty acyl donor, but not acyl-CoA or acyl-ACP. This chain is Glycerol-3-phosphate acyltransferase, found in Geotalea daltonii (strain DSM 22248 / JCM 15807 / FRC-32) (Geobacter daltonii).